Consider the following 510-residue polypeptide: Leucine-rich repeat-containing protein 53 (510 aa).

LRR repeat units follow at residues 34-55, 58-79, 82-102, 108-129, 132-153, 158-179, and 182-203; these read TTRV…NLSL, NLAL…ALDG, MLRT…TDHT, SLQV…WFRN, GLTR…SFGG, SLRH…AFRP, and QLQE…FTPL. Residues 214-271 enclose the LRRCT domain; the sequence is NQWSCTCDLHPLARFLRNYIKSSAHTLRNAKDLNCQPSTAAVAAAQSVLRLSETNCDP. The helical transmembrane segment at 294–314 threads the bilayer; sequence LLTVLGFAGAVGLTCLGLVVF.

The protein resides in the membrane. This is Leucine-rich repeat-containing protein 53 (LRRC53) from Macaca fascicularis (Crab-eating macaque).